The primary structure comprises 786 residues: UPF0313 protein SO_0311 (786 aa).

The Radical SAM core domain maps to 371–649; it reads AYDMIKTSIN…KALLRYHDPA (279 aa). Residues C385, C389, and C392 each coordinate [4Fe-4S] cluster. Disordered stretches follow at residues 669 to 688 and 698 to 786; these read NSPN…PKWM and LTRF…QQAK. Basic and acidic residues-rich tracts occupy residues 679–688 and 706–717; these read GRNERGPKWM and FDERKGKGDAKG. Low complexity predominate over residues 718 to 731; that stretch reads KPSASKPKGPKSGA. Over residues 732-741 the composition is skewed to polar residues; the sequence is NAPQSQQPKT.

It belongs to the UPF0313 family. [4Fe-4S] cluster serves as cofactor.

In Shewanella oneidensis (strain ATCC 700550 / JCM 31522 / CIP 106686 / LMG 19005 / NCIMB 14063 / MR-1), this protein is UPF0313 protein SO_0311.